The chain runs to 103 residues: Small ribosomal subunit protein uS10 (103 aa).

It belongs to the universal ribosomal protein uS10 family. Part of the 30S ribosomal subunit.

Involved in the binding of tRNA to the ribosomes. The polypeptide is Small ribosomal subunit protein uS10 (Chromohalobacter salexigens (strain ATCC BAA-138 / DSM 3043 / CIP 106854 / NCIMB 13768 / 1H11)).